The following is a 361-amino-acid chain: tRNA-specific 2-thiouridylase MnmA (361 aa).

Residues 8–15 (GMSGGVDS) and methionine 34 contribute to the ATP site. The tract at residues 94 to 96 (NPD) is interaction with target base in tRNA. Residue cysteine 99 is the Nucleophile of the active site. A disulfide bridge links cysteine 99 with cysteine 195. Residue glycine 123 coordinates ATP. The interval 145–147 (KDQ) is interaction with tRNA. The Cysteine persulfide intermediate role is filled by cysteine 195. Positions 307-308 (RY) are interaction with tRNA.

This sequence belongs to the MnmA/TRMU family.

It is found in the cytoplasm. It carries out the reaction S-sulfanyl-L-cysteinyl-[protein] + uridine(34) in tRNA + AH2 + ATP = 2-thiouridine(34) in tRNA + L-cysteinyl-[protein] + A + AMP + diphosphate + H(+). Functionally, catalyzes the 2-thiolation of uridine at the wobble position (U34) of tRNA, leading to the formation of s(2)U34. In Legionella pneumophila subsp. pneumophila (strain Philadelphia 1 / ATCC 33152 / DSM 7513), this protein is tRNA-specific 2-thiouridylase MnmA.